We begin with the raw amino-acid sequence, 299 residues long: Centriolar and ciliogenesis-associated protein HYLS1 (299 aa).

A Phosphoserine modification is found at serine 179.

It belongs to the HYLS1 family.

The protein resides in the cytoplasm. Its subcellular location is the cell projection. The protein localises to the cilium. It is found in the cytoskeleton. It localises to the microtubule organizing center. The protein resides in the centrosome. Its subcellular location is the centriole. Plays a role in ciliogenesis. The chain is Centriolar and ciliogenesis-associated protein HYLS1 from Homo sapiens (Human).